Reading from the N-terminus, the 146-residue chain is Hemoglobin subunit beta (146 aa).

The residue at position 1 (V1) is an N-acetylvaline. One can recognise a Globin domain in the interval 2-146 (HLSGEEKACV…VANALAHKYH (145 aa)). Phosphothreonine is present on T12. Residue S44 is modified to Phosphoserine. The residue at position 59 (K59) is an N6-acetyllysine. H63 is a binding site for heme b. K82 is subject to N6-acetyllysine. H92 provides a ligand contact to heme b. An S-nitrosocysteine modification is found at C93. Position 144 is an N6-acetyllysine (K144).

This sequence belongs to the globin family. Heterotetramer of two alpha chains and two beta chains. Red blood cells.

In terms of biological role, involved in oxygen transport from the lung to the various peripheral tissues. This Suncus murinus (Asian house shrew) protein is Hemoglobin subunit beta (HBB).